The chain runs to 572 residues: Light-independent protochlorophyllide reductase subunit N (572 aa).

Positions 106, 131, and 191 each coordinate [4Fe-4S] cluster. The disordered stretch occupies residues 249-268; that stretch reads SLDSMKLPSGGREKQINDVN.

It belongs to the BchN/ChlN family. As to quaternary structure, protochlorophyllide reductase is composed of three subunits; ChlL, ChlN and ChlB. Forms a heterotetramer of two ChlB and two ChlN subunits. The cofactor is [4Fe-4S] cluster.

Its subcellular location is the plastid. The protein localises to the chloroplast. The enzyme catalyses chlorophyllide a + oxidized 2[4Fe-4S]-[ferredoxin] + 2 ADP + 2 phosphate = protochlorophyllide a + reduced 2[4Fe-4S]-[ferredoxin] + 2 ATP + 2 H2O. Its pathway is porphyrin-containing compound metabolism; chlorophyll biosynthesis (light-independent). In terms of biological role, component of the dark-operative protochlorophyllide reductase (DPOR) that uses Mg-ATP and reduced ferredoxin to reduce ring D of protochlorophyllide (Pchlide) to form chlorophyllide a (Chlide). This reaction is light-independent. The NB-protein (ChlN-ChlB) is the catalytic component of the complex. The protein is Light-independent protochlorophyllide reductase subunit N of Oltmannsiellopsis viridis (Marine flagellate).